The sequence spans 563 residues: MNTKELIASELASIIDSLDQEAILKLLETPKNSEMGDIAFPAFSLAKVERKAPQMIAAELAEKMNSQAFEKVVATGPYVNFFLDKSTISAQVLQAVTTEKEHYADQNIGKQENVVIDMSSPNIAKPFSIGHLRSTVIGDSLSHIFQKIGYQTVKVNHLGDWGKQFGMLIVAYKKWGDEEAVKAHPIDELLKLYVRINAEAENDPSLDEEAREWFRKLENGDEEALALWQWFRDESLVEFNRLYNELKVEFDSYNGEAFYNDKMDAVVDILSEKGLLLESEGAQVVNLEKYGIEHPALIKKSDGATLYITRDLAAALYRKNEYQFAKSIYVVGQEQSAHFKQLKAVLQEMGYDWSDDITHVPFGLVTKEGKKLSTRKGNVILLEPTVAEAVSRAKVQIEAKNPELENKDQVAHAVGVGAIKFYDLKTDRTNGYDFDLEAMVSFEGETGPYVQYAYARIQSILRKADFKPETAGNYSLNDTESWEIIKLIQDFPRIINRAADNFEPSIIAKFAISLAQSFNKYYAHTRILDESPERDSRLALSYATAVVLKEALRLLGVEAPEKM.

A 'HIGH' region motif is present at residues 121 to 131 (PNIAKPFSIGH).

Belongs to the class-I aminoacyl-tRNA synthetase family. As to quaternary structure, monomer.

The protein localises to the cytoplasm. It catalyses the reaction tRNA(Arg) + L-arginine + ATP = L-arginyl-tRNA(Arg) + AMP + diphosphate. This Streptococcus pneumoniae (strain Hungary19A-6) protein is Arginine--tRNA ligase.